The chain runs to 417 residues: Serine hydroxymethyltransferase (417 aa).

(6S)-5,6,7,8-tetrahydrofolate contacts are provided by residues leucine 116 and 120 to 122 (GHL). The residue at position 225 (lysine 225) is an N6-(pyridoxal phosphate)lysine.

It belongs to the SHMT family. Homodimer. Pyridoxal 5'-phosphate serves as cofactor.

The protein localises to the cytoplasm. It catalyses the reaction (6R)-5,10-methylene-5,6,7,8-tetrahydrofolate + glycine + H2O = (6S)-5,6,7,8-tetrahydrofolate + L-serine. It participates in one-carbon metabolism; tetrahydrofolate interconversion. The protein operates within amino-acid biosynthesis; glycine biosynthesis; glycine from L-serine: step 1/1. Functionally, catalyzes the reversible interconversion of serine and glycine with tetrahydrofolate (THF) serving as the one-carbon carrier. This reaction serves as the major source of one-carbon groups required for the biosynthesis of purines, thymidylate, methionine, and other important biomolecules. Also exhibits THF-independent aldolase activity toward beta-hydroxyamino acids, producing glycine and aldehydes, via a retro-aldol mechanism. This is Serine hydroxymethyltransferase from Hydrogenobaculum sp. (strain Y04AAS1).